Consider the following 59-residue polypeptide: Embryonic testis differentiation protein homolog C (59 aa).

The segment at 1-22 is disordered; it reads MDKELPKASPSEPALNIKKSGK.

In Homo sapiens (Human), this protein is Embryonic testis differentiation protein homolog C.